The sequence spans 332 residues: Cell growth regulator with RING finger domain protein 1 (332 aa).

The RING-type zinc-finger motif lies at 274–309 (CVVCQNGGVNWVLLPCRHACLCDSCVCYFKQCPMCR).

In terms of tissue distribution, highly expressed in testis, lower levels of expression is seen in skeletal muscle, liver, lung and brain.

The protein resides in the nucleus. It is found in the endoplasmic reticulum. Able to inhibit growth in several cell lines. This Rattus norvegicus (Rat) protein is Cell growth regulator with RING finger domain protein 1 (Cgrrf1).